Reading from the N-terminus, the 148-residue chain is UPF0756 membrane protein YeaL (148 aa).

Transmembrane regions (helical) follow at residues 14 to 34 (ALGF…LIIV), 51 to 71 (LSIG…SGTL), 86 to 106 (LVAI…VTLM), and 121 to 141 (VLGV…AGLV).

Belongs to the UPF0756 family.

It is found in the cell membrane. The chain is UPF0756 membrane protein YeaL from Escherichia coli O127:H6 (strain E2348/69 / EPEC).